The sequence spans 369 residues: Flagellar P-ring protein (369 aa).

The N-terminal stretch at 1 to 22 is a signal peptide; the sequence is MIKLKQLIAATLLLSAAFGAHA.

It belongs to the FlgI family. As to quaternary structure, the basal body constitutes a major portion of the flagellar organelle and consists of four rings (L,P,S, and M) mounted on a central rod.

It is found in the periplasm. The protein resides in the bacterial flagellum basal body. Functionally, assembles around the rod to form the L-ring and probably protects the motor/basal body from shearing forces during rotation. This is Flagellar P-ring protein from Pseudomonas syringae pv. tomato (strain ATCC BAA-871 / DC3000).